A 228-amino-acid chain; its full sequence is MKKAVVLLSGGMDSATTLAIARQSGFACYALSIDYGQRHVAELAAAARIGQSLQVSDHQFLKLDLAVLASSVLTDISATVPLHGTSTGIPVTYVPARNTIMLALALAWAEVLGSHDIFIGVTAVDYSGYPDCRRDYIDAFEKMANLATKAGREGMVLTVHAPLIDLPKREIIQCGMELGIDYGLTVSCYQADEAGYACGQCDACHIRRAGFEAADIPDPTCYRNKQIS.

An ATP-binding site is contributed by 8–18; sequence LSGGMDSATTL. Positions 188, 198, 201, and 204 each coordinate Zn(2+).

Belongs to the QueC family. Requires Zn(2+) as cofactor.

The enzyme catalyses 7-carboxy-7-deazaguanine + NH4(+) + ATP = 7-cyano-7-deazaguanine + ADP + phosphate + H2O + H(+). The protein operates within purine metabolism; 7-cyano-7-deazaguanine biosynthesis. Its function is as follows. Catalyzes the ATP-dependent conversion of 7-carboxy-7-deazaguanine (CDG) to 7-cyano-7-deazaguanine (preQ(0)). This Nitrosomonas europaea (strain ATCC 19718 / CIP 103999 / KCTC 2705 / NBRC 14298) protein is 7-cyano-7-deazaguanine synthase.